A 563-amino-acid polypeptide reads, in one-letter code: Arginine--tRNA ligase (563 aa).

A 'HIGH' region motif is present at residues 121 to 131; it reads PNIAKPFSIGH.

This sequence belongs to the class-I aminoacyl-tRNA synthetase family. As to quaternary structure, monomer.

The protein localises to the cytoplasm. The enzyme catalyses tRNA(Arg) + L-arginine + ATP = L-arginyl-tRNA(Arg) + AMP + diphosphate. This chain is Arginine--tRNA ligase, found in Streptococcus mutans serotype c (strain ATCC 700610 / UA159).